Reading from the N-terminus, the 163-residue chain is General stress protein 16O (163 aa).

A compositionally biased stretch (basic and acidic residues) spans 19–30 (QKELSGEKKETE). Disordered regions lie at residues 19–55 (QKEL…TLVT) and 115–163 (ADVE…QDSK). A dksA C4-type; degenerate zinc finger spans residues 89–123 (CEKTGQEIPYERLEAVPYARMTVEAQADVEDDLET). A compositionally biased stretch (basic and acidic residues) spans 127 to 146 (SYEREFHEQVKDLSNKETID).

This Bacillus subtilis (strain 168) protein is General stress protein 16O (yocK).